The following is a 383-amino-acid chain: N-acetyldiaminopimelate deacetylase (383 aa).

Residue Asp75 is part of the active site. Glu134 acts as the Proton acceptor in catalysis.

The protein belongs to the peptidase M20A family. N-acetyldiaminopimelate deacetylase subfamily.

It carries out the reaction N-acetyl-(2S,6S)-2,6-diaminopimelate + H2O = (2S,6S)-2,6-diaminopimelate + acetate. It participates in amino-acid biosynthesis; L-lysine biosynthesis via DAP pathway; LL-2,6-diaminopimelate from (S)-tetrahydrodipicolinate (acetylase route): step 3/3. Its function is as follows. Catalyzes the conversion of N-acetyl-diaminopimelate to diaminopimelate and acetate. The polypeptide is N-acetyldiaminopimelate deacetylase (Lactobacillus acidophilus (strain ATCC 700396 / NCK56 / N2 / NCFM)).